A 794-amino-acid chain; its full sequence is Phenylalanine--tRNA ligase beta subunit (794 aa).

Residues 39–154 form the tRNA-binding domain; it reads SSSFSSIITA…ANTPLGESAC (116 aa). The 79-residue stretch at 403–481 folds into the B5 domain; the sequence is PPSPTLTLRT…QPWKIEKKKA (79 aa). Residues Asp-457, Asp-463, Glu-466, and Glu-467 each contribute to the Mg(2+) site. The 97-residue stretch at 697-793 folds into the FDX-ACB domain; the sequence is PIYPSSFRDI…QLDDTKGTID (97 aa).

It belongs to the phenylalanyl-tRNA synthetase beta subunit family. Type 1 subfamily. As to quaternary structure, tetramer of two alpha and two beta subunits. Mg(2+) serves as cofactor.

It localises to the cytoplasm. It catalyses the reaction tRNA(Phe) + L-phenylalanine + ATP = L-phenylalanyl-tRNA(Phe) + AMP + diphosphate + H(+). This chain is Phenylalanine--tRNA ligase beta subunit, found in Chlamydia abortus (strain DSM 27085 / S26/3) (Chlamydophila abortus).